We begin with the raw amino-acid sequence, 2319 residues long: AT-rich interactive domain-containing protein 1B (2319 aa).

Composition is skewed to low complexity over residues 1-21 (MAAR…ARAG) and 43-56 (GARG…APGP). 6 disordered regions span residues 1–74 (MAAR…VHHH), 155–306 (VGEA…GGGG), 321–414 (APAS…GAGA), 487–546 (RFAG…AGAA), 577–1062 (QQRS…LMNT), and 1085–1129 (DMMS…KITK). Position 2 is an N-acetylalanine (alanine 2). Over residues 57–68 (MLGGGGDGGGGL) the composition is skewed to gly residues. Basic residues predominate over residues 165–188 (QQHHHHHHAHHHHHHAHHLHHHHA). Low complexity-rich tracts occupy residues 189–215 (LQQQ…QQQH) and 343–363 (SPGM…PGSM). Positions 365-379 (PLQNSHEGYPNSQCN) are enriched in polar residues. Over residues 388–414 (GAGGGGGGGGGGGGGSGGGGGGGGAGA) the composition is skewed to gly residues. The residue at position 487 (arginine 487) is an Asymmetric dimethylarginine. Polar residues predominate over residues 489-510 (AGQNQHPSGATPTLNQLLTSPS). The LXXLL motif lies at 502–506 (LNQLL). Over residues 536-546 (PQSQAAAAGAA) the composition is skewed to low complexity. Phosphoserine is present on residues serine 585 and serine 599. The residue at position 608 (arginine 608) is an Asymmetric dimethylarginine. Low complexity predominate over residues 620-630 (SQPQQSSPYPG). Arginine 640 carries the asymmetric dimethylarginine modification. Low complexity-rich tracts occupy residues 651 to 670 (GAMA…YGQQ), 677 to 687 (QQGQQPYYSQQ), 695 to 712 (PQAQ…QPQQ), 767 to 783 (SSAV…GDQS), 811 to 832 (GSPV…IPGS), and 840 to 849 (GSQSESSSHP). The span at 866–880 (TQRNPQMAQYGPQQT) shows a compositional bias: polar residues. Residues 881-892 (GPSMSPHPSPGG) show a composition bias toward low complexity. Polar residues-rich tracts occupy residues 899–923 (SSFQ…QGNY) and 947–958 (SANNQMHGQGPS). Composition is skewed to low complexity over residues 980–994 (PGNM…PGMS) and 1014–1028 (EAAA…NSAQ). Over residues 1029–1062 (SRQGSFPGMNQSGLMASSSPYSQPMNNSSSLMNT) the composition is skewed to polar residues. In terms of domain architecture, ARID spans 1136 to 1227 (EPERKLWVDR…YLFAFECKIE (92 aa)). Disordered stretches follow at residues 1230-1334 (EEPP…QQGM), 1346-1443 (EPNK…PNYK), 1475-1647 (NQYG…FLPS), and 1782-1852 (DHNA…KQAS). Polar residues-rich tracts occupy residues 1254–1273 (ANSG…SNSM) and 1287–1304 (STPH…SSTI). Low complexity predominate over residues 1305–1319 (SVHDPFSDVSDSSFP). Polar residues-rich tracts occupy residues 1320–1334 (KRNS…QQGM) and 1364–1388 (PFMT…SGAM). A compositionally biased stretch (low complexity) spans 1426-1440 (PPYGGHQPGLYPQQP). The short motif at 1441–1460 (NYKRHMDGMYGPPAKRHEGD) is the Nuclear localization signal element. 2 stretches are compositionally biased toward polar residues: residues 1522–1534 (LQSS…QQNM) and 1579–1601 (ESQW…SMQP). Phosphoserine occurs at positions 1625, 1638, and 1642. A compositionally biased stretch (polar residues) spans 1627 to 1641 (ASFQRSLENRMSPSK). Over residues 1782 to 1791 (DHNAARKDDS) the composition is skewed to basic and acidic residues. Serine 1798 carries the post-translational modification Phosphoserine. Residues 1799-1823 (GKEEEDAECIDDDEEDEEDEEEDSE) are compositionally biased toward acidic residues. The segment covering 1842–1852 (ADPKEKPKQAS) has biased composition (basic and acidic residues). The residue at position 1860 (lysine 1860) is an N6-acetyllysine. Disordered regions lie at residues 1904–1941 (FESK…QQEK) and 1954–1973 (RPGA…SSKF). A compositionally biased stretch (basic and acidic residues) spans 1925 to 1940 (RKKEQEGKGDSEEQQE). Positions 2119–2123 (LDGLL) match the LXXLL motif.

Component of SWI/SNF chromatin remodeling complexes, in some of which it can be mutually exclusive with ARID1B/BAF250B. The canonical complex contains a catalytic subunit (either SMARCA4/BRG1/BAF190A or SMARCA2/BRM/BAF190B) and at least SMARCE1, ACTL6A/BAF53, SMARCC1/BAF155, SMARCC2/BAF170, and SMARCB1/SNF5/BAF47. Other subunits specific to each of the complexes may also be present permitting several possible combinations developmentally and tissue specific. Component of the BAF (SWI/SNF-A) complex, which includes at least actin (ACTB), ARID1A/BAF250A, ARID1B/BAF250B, SMARCA2/BRM, SMARCA4/BRG1/BAF190A, ACTL6A/BAF53, ACTL6B/BAF53B, SMARCE1/BAF57, SMARCC1/BAF155, SMARCC2/BAF170, SMARCB1/SNF5/INI1, and one or more SMARCD1/BAF60A, SMARCD2/BAF60B, or SMARCD3/BAF60C. In muscle cells, the BAF complex also contains DPF3. Component of neural progenitors-specific chromatin remodeling complex (npBAF complex) composed of at least, ARID1A/BAF250A or ARID1B/BAF250B, SMARCD1/BAF60A, SMARCD3/BAF60C, SMARCA2/BRM/BAF190B, SMARCA4/BRG1/BAF190A, SMARCB1/BAF47, SMARCC1/BAF155, SMARCE1/BAF57, SMARCC2/BAF170, PHF10/BAF45A, ACTL6A/BAF53A and actin. Component of neuron-specific chromatin remodeling complex (nBAF complex) composed of at least, ARID1A/BAF250A or ARID1B/BAF250B, SMARCD1/BAF60A, SMARCD3/BAF60C, SMARCA2/BRM/BAF190B, SMARCA4/BRG1/BAF190A, SMARCB1/BAF47, SMARCC1/BAF155, SMARCE1/BAF57, SMARCC2/BAF170, DPF1/BAF45B, DPF3/BAF45C, ACTL6B/BAF53B and actin. Component of a SWI/SNF-like EBAFb complex, at least composed of SMARCA4/BRG1/BAF190A, SMARCB1/BAF47/SNF5, ACTL6A/BAF53A, SMARCE1/BAF57, SMARCD1/BAF60A, SMARCD2/BAF60B, SMARCC1/BAF155, SMARCC2/BAF170, ARID1B/BAF250B, MLLT1/ENL and actin. Interacts through its C-terminus with SMARCA2/BRM/BAF190B and SMARCA4/BRG1/BAF190A. Interacts with SMARCC1/BAF155. Widely expressed with high levels in heart, skeletal muscle and kidney.

Its subcellular location is the nucleus. Its function is as follows. Involved in transcriptional activation and repression of select genes by chromatin remodeling (alteration of DNA-nucleosome topology). Component of SWI/SNF chromatin remodeling complexes that carry out key enzymatic activities, changing chromatin structure by altering DNA-histone contacts within a nucleosome in an ATP-dependent manner. Belongs to the neural progenitors-specific chromatin remodeling complex (npBAF complex) and the neuron-specific chromatin remodeling complex (nBAF complex). During neural development a switch from a stem/progenitor to a postmitotic chromatin remodeling mechanism occurs as neurons exit the cell cycle and become committed to their adult state. The transition from proliferating neural stem/progenitor cells to postmitotic neurons requires a switch in subunit composition of the npBAF and nBAF complexes. As neural progenitors exit mitosis and differentiate into neurons, npBAF complexes which contain ACTL6A/BAF53A and PHF10/BAF45A, are exchanged for homologous alternative ACTL6B/BAF53B and DPF1/BAF45B or DPF3/BAF45C subunits in neuron-specific complexes (nBAF). The npBAF complex is essential for the self-renewal/proliferative capacity of the multipotent neural stem cells. The nBAF complex along with CREST plays a role regulating the activity of genes essential for dendrite growth. Binds DNA non-specifically. The sequence is that of AT-rich interactive domain-containing protein 1B from Homo sapiens (Human).